Here is a 1059-residue protein sequence, read N- to C-terminus: Probable sucrose-phosphate synthase (1059 aa).

Disordered stretches follow at residues 95 to 145 (AVQR…VKSR), 671 to 695 (RHPQ…GDSL), 710 to 731 (DGER…NATD), and 748 to 769 (SKDT…ASKF). Basic and acidic residues predominate over residues 102–114 (RRLERERGRREAT). Residues 681–691 (GGESSESEESP) show a composition bias toward acidic residues.

Belongs to the glycosyltransferase 1 family. As to quaternary structure, homodimer or homotetramer.

It carries out the reaction beta-D-fructose 6-phosphate + UDP-alpha-D-glucose = sucrose 6(F)-phosphate + UDP + H(+). It functions in the pathway glycan biosynthesis; sucrose biosynthesis; sucrose from D-fructose 6-phosphate and UDP-alpha-D-glucose: step 1/2. Its activity is regulated as follows. Activity is regulated by phosphorylation and moderated by concentration of metabolites and light. Functionally, plays a role in photosynthetic sucrose synthesis by catalyzing the rate-limiting step of sucrose biosynthesis from UDP-glucose and fructose- 6-phosphate. Involved in the regulation of carbon partitioning in the leaves of plants. May regulate the synthesis of sucrose and therefore play a major role as a limiting factor in the export of photoassimilates out of the leaf. Plays a role for sucrose availability that is essential for plant growth and fiber elongation. The sequence is that of Probable sucrose-phosphate synthase (SPS) from Vicia faba (Broad bean).